The following is a 75-amino-acid chain: Small ribosomal subunit protein bS18 (75 aa).

Belongs to the bacterial ribosomal protein bS18 family. As to quaternary structure, part of the 30S ribosomal subunit. Forms a tight heterodimer with protein bS6.

Binds as a heterodimer with protein bS6 to the central domain of the 16S rRNA, where it helps stabilize the platform of the 30S subunit. This Thermotoga maritima (strain ATCC 43589 / DSM 3109 / JCM 10099 / NBRC 100826 / MSB8) protein is Small ribosomal subunit protein bS18.